Reading from the N-terminus, the 109-residue chain is UPF0060 membrane protein HEAR0108 (109 aa).

4 helical membrane-spanning segments follow: residues 7-27, 33-53, 63-83, and 87-107; these read VALFVVTAIAEIVGCYLPYLW, SIWLLLPAALSLALFAWLLSL, AAYGGIYVAVALGWLWLVDGI, and NWDVAGVVFTFIGMGIIMFAP.

The protein belongs to the UPF0060 family.

It is found in the cell inner membrane. The polypeptide is UPF0060 membrane protein HEAR0108 (Herminiimonas arsenicoxydans).